A 241-amino-acid chain; its full sequence is Uracil-DNA glycosylase (241 aa).

Asp73 functions as the Proton acceptor in the catalytic mechanism.

Belongs to the uracil-DNA glycosylase (UDG) superfamily. UNG family.

Its subcellular location is the cytoplasm. It carries out the reaction Hydrolyzes single-stranded DNA or mismatched double-stranded DNA and polynucleotides, releasing free uracil.. Its function is as follows. Excises uracil residues from the DNA which can arise as a result of misincorporation of dUMP residues by DNA polymerase or due to deamination of cytosine. The sequence is that of Uracil-DNA glycosylase from Agrobacterium fabrum (strain C58 / ATCC 33970) (Agrobacterium tumefaciens (strain C58)).